The primary structure comprises 490 residues: Membrane-bound lytic murein transglycosylase F (490 aa).

Residues 1–32 form the signal peptide; the sequence is MFALTAYRLRCAAWLLATGIFLLLAGCSEAKA. Residues 33–269 form a non-LT domain region; that stretch reads PTALERVQKE…RLKDRYYGHV (237 aa). The tract at residues 270–490 is LT domain; that stretch reads DVLGYVGAYT…PEEDSGDEKL (221 aa). Glu-316 is a catalytic residue. The disordered stretch occupies residues 467–490; the sequence is AESGLHLPGVNKTRPEEDSGDEKL. A compositionally biased stretch (basic and acidic residues) spans 479 to 490; the sequence is TRPEEDSGDEKL.

It in the N-terminal section; belongs to the bacterial solute-binding protein 3 family. In the C-terminal section; belongs to the transglycosylase Slt family.

It localises to the cell outer membrane. The enzyme catalyses Exolytic cleavage of the (1-&gt;4)-beta-glycosidic linkage between N-acetylmuramic acid (MurNAc) and N-acetylglucosamine (GlcNAc) residues in peptidoglycan, from either the reducing or the non-reducing ends of the peptidoglycan chains, with concomitant formation of a 1,6-anhydrobond in the MurNAc residue.. In terms of biological role, murein-degrading enzyme that degrades murein glycan strands and insoluble, high-molecular weight murein sacculi, with the concomitant formation of a 1,6-anhydromuramoyl product. Lytic transglycosylases (LTs) play an integral role in the metabolism of the peptidoglycan (PG) sacculus. Their lytic action creates space within the PG sacculus to allow for its expansion as well as for the insertion of various structures such as secretion systems and flagella. The sequence is that of Membrane-bound lytic murein transglycosylase F from Pseudomonas aeruginosa (strain ATCC 15692 / DSM 22644 / CIP 104116 / JCM 14847 / LMG 12228 / 1C / PRS 101 / PAO1).